The sequence spans 297 residues: Oxidoreductase aprR (297 aa).

Belongs to the NmrA-type oxidoreductase family. Isoflavone reductase subfamily.

The protein operates within secondary metabolite biosynthesis. Functionally, oxidoreductase; part of the gene cluster that mediates the biosynthesis of the asperipin-2a, a bicyclic peptide that possesses two macrocyclic ether rings consisting of 14- and 17-membered paracyclophans. The pathway starts with the processing of the precursor aprA by kexin proteases to produce 11 identical copies of the hexapeptide Phe-Tyr-Tyr-Thr-Gly-Tyr. Macrocyclization of asperipin-2a may accompany an alpha-hydroxylation-dehydration sequence to give an imine, which is readily hydrolyzed to yield putative ketone intermediate. The reductase aprR may be required for the final reduction to yield asperipin-2a. This chain is Oxidoreductase aprR, found in Aspergillus flavus (strain ATCC 200026 / FGSC A1120 / IAM 13836 / NRRL 3357 / JCM 12722 / SRRC 167).